A 370-amino-acid chain; its full sequence is uncharacterized protein (370 aa).

Residues 1-27 (MSSAANEGCVYLFIVVLRLSSFSCVNS) form the signal peptide. 3 N-linked (GlcNAc...) asparagine glycosylation sites follow: asparagine 59, asparagine 98, and asparagine 126. Disordered regions lie at residues 81-101 (SRSH…NTTA) and 123-167 (LSEN…CHQP). Acidic residues predominate over residues 139–148 (HDDDDDDDLE). 4 N-linked (GlcNAc...) asparagine glycosylation sites follow: asparagine 171, asparagine 221, asparagine 230, and asparagine 262.

This is an uncharacterized protein from Saccharomyces cerevisiae (strain ATCC 204508 / S288c) (Baker's yeast).